The following is a 415-amino-acid chain: DNA polymerase IV 2 (415 aa).

A UmuC domain is found at 7-183; sequence ILHADLDAFY…LPVSLMWGVG (177 aa). Positions 11 and 101 each coordinate Mg(2+). The active site involves E102.

The protein belongs to the DNA polymerase type-Y family. Monomer. Mg(2+) is required as a cofactor.

It localises to the cytoplasm. The catalysed reaction is DNA(n) + a 2'-deoxyribonucleoside 5'-triphosphate = DNA(n+1) + diphosphate. In terms of biological role, poorly processive, error-prone DNA polymerase involved in untargeted mutagenesis. Copies undamaged DNA at stalled replication forks, which arise in vivo from mismatched or misaligned primer ends. These misaligned primers can be extended by PolIV. Exhibits no 3'-5' exonuclease (proofreading) activity. May be involved in translesional synthesis, in conjunction with the beta clamp from PolIII. This chain is DNA polymerase IV 2 (dinB2), found in Mesorhizobium japonicum (strain LMG 29417 / CECT 9101 / MAFF 303099) (Mesorhizobium loti (strain MAFF 303099)).